The primary structure comprises 138 residues: Small ribosomal subunit protein uS11c (138 aa).

The interval 1–23 (MKKPIPRIGSRRNGRIGSRKNGR) is disordered.

The protein belongs to the universal ribosomal protein uS11 family. In terms of assembly, part of the 30S ribosomal subunit.

The protein resides in the plastid. The protein localises to the chloroplast. The polypeptide is Small ribosomal subunit protein uS11c (Amborella trichopoda).